A 1279-amino-acid polypeptide reads, in one-letter code: Talin-A (1279 aa).

Residues 84–365 enclose the FERM domain; the sequence is RPQKFKLLDG…GYIEIIMKAR (282 aa).

It is found in the cytoplasm. The protein localises to the cytoskeleton. It localises to the cell cortex. Functionally, actin-binding protein that may be involved in the control of cell motility and chemotaxis. This is Talin-A (talA) from Dictyostelium discoideum (Social amoeba).